Here is a 283-residue protein sequence, read N- to C-terminus: Probable cytochrome c oxidase subunit 3 (283 aa).

6 consecutive transmembrane segments (helical) span residues 26 to 46 (PWPV…VSFM), 51 to 71 (FNIY…YSWW), 94 to 114 (IGMA…FASF), 179 to 199 (CVTA…MQAY), 217 to 237 (FYLA…FLII), and 261 to 281 (AWYW…VYIF).

It belongs to the cytochrome c oxidase subunit 3 family.

Its subcellular location is the cell membrane. The catalysed reaction is 4 Fe(II)-[cytochrome c] + O2 + 8 H(+)(in) = 4 Fe(III)-[cytochrome c] + 2 H2O + 4 H(+)(out). The chain is Probable cytochrome c oxidase subunit 3 (ctaE) from Rickettsia conorii (strain ATCC VR-613 / Malish 7).